Reading from the N-terminus, the 562-residue chain is 2-hydroxyisobutanoyl-CoA mutase large subunit (562 aa).

(3S)-3-hydroxybutanoyl-CoA contacts are provided by residues 76-79 (YPTM), 86-88 (TMR), Asp117, 196-198 (TVQ), Arg235, Asn240, His245, and Arg284.

It belongs to the acyl-CoA mutase large subunit family. Homotetramer composed of two large substrate-binding subunits (HcmA) and two small cobalamin-binding subunits (HcmB).

It carries out the reaction 2-hydroxyisobutanoyl-CoA = (3S)-3-hydroxybutanoyl-CoA. In terms of biological role, together with HcmB, catalyzes the isomerization of 2-hydroxyisobutyryl-CoA and 3-hydroxybutyryl-CoA. Is specific for 2-hydroxyisobutyryl-CoA and (S)-3-hydroxybutyryl-CoA, and shows only very low activity with (R)-3-hydroxybutyryl-CoA, isobutyryl-CoA and butyryl-CoA. In vitro, can isomerize pivalyl-CoA and isovaleryl-CoA, with much lower efficiency. Plays a central role in the degradation of substrates bearing a tert-butyl moiety, such as the fuel oxygenate methyl tert-butyl ether (MTBE) and its metabolites. The sequence is that of 2-hydroxyisobutanoyl-CoA mutase large subunit from Aquincola tertiaricarbonis.